Reading from the N-terminus, the 508-residue chain is Photosystem II CP47 reaction center protein (508 aa).

6 helical membrane-spanning segments follow: residues 21–36 (SVHL…WAGS), 101–115 (IILS…IWHW), 140–156 (GVHL…FGVF), 203–218 (IAAG…FHVL), 237–252 (VLSS…AFVV), and 457–472 (SFAL…HGAR).

This sequence belongs to the PsbB/PsbC family. PsbB subfamily. PSII is composed of 1 copy each of membrane proteins PsbA, PsbB, PsbC, PsbD, PsbE, PsbF, PsbH, PsbI, PsbJ, PsbK, PsbL, PsbM, PsbT, PsbY, PsbZ, Psb30/Ycf12, at least 3 peripheral proteins of the oxygen-evolving complex and a large number of cofactors. It forms dimeric complexes. Binds multiple chlorophylls. PSII binds additional chlorophylls, carotenoids and specific lipids. is required as a cofactor.

It is found in the plastid. The protein resides in the chloroplast thylakoid membrane. One of the components of the core complex of photosystem II (PSII). It binds chlorophyll and helps catalyze the primary light-induced photochemical processes of PSII. PSII is a light-driven water:plastoquinone oxidoreductase, using light energy to abstract electrons from H(2)O, generating O(2) and a proton gradient subsequently used for ATP formation. In Euglena gracilis, this protein is Photosystem II CP47 reaction center protein.